Consider the following 131-residue polypeptide: Two-component response regulator ORR3 (131 aa).

Residues 12-129 enclose the Response regulatory domain; the sequence is HVLAVDDSIV…DVSRLCNRVI (118 aa). Residue aspartate 62 is modified to 4-aspartylphosphate.

This sequence belongs to the ARR family. Type-A subfamily. Post-translationally, two-component system major event consists of a His-to-Asp phosphorelay between a sensor histidine kinase (HK) and a response regulator (RR). In plants, the His-to-Asp phosphorelay involves an additional intermediate named Histidine-containing phosphotransfer protein (HPt). This multistep phosphorelay consists of a His-Asp-His-Asp sequential transfer of a phosphate group between first a His and an Asp of the HK protein, followed by the transfer to a conserved His of the HPt protein and finally the transfer to an Asp in the receiver domain of the RR protein. As to expression, expressed in roots, mature leaves and flowers, and at low levels in shoots.

Functions as a response regulator involved in His-to-Asp phosphorelay signal transduction system. Phosphorylation of the Asp residue in the receiver domain activates the ability of the protein to promote the transcription of target genes. Type-A response regulators seem to act as negative regulators of the cytokinin signaling. The chain is Two-component response regulator ORR3 from Oryza sativa subsp. indica (Rice).